A 749-amino-acid chain; its full sequence is cGMP-dependent protein kinase egl-4 (749 aa).

Positions 30 to 96 (EAHELQKLIP…LEQKAQSAAS (67 aa)) form a coiled coil. The segment at 87–111 (LEQKAQSAASPGQPPSPSPRTDQLG) is disordered. 3',5'-cyclic GMP is bound by residues 234–237 (GELA), 244–245 (RT), arginine 349, 358–361 (GERA), 368–369 (RT), and tyrosine 403. The Protein kinase domain maps to 438-698 (VKRLATLGVG…VNDIRKHRWF (261 aa)). ATP is bound by residues 444–452 (LGVGGFGRV) and lysine 468. The Nuclear localization signal motif lies at 461–473 (KSKTYALKALKKK). The active-site Proton acceptor is the aspartate 562. One can recognise an AGC-kinase C-terminal domain in the interval 699–749 (MGFDWEGLRTKTLKPPILPKVNNPADVTNFDNYPPDNDVPPDEFSGWDEGF). A disordered region spans residues 723 to 749 (ADVTNFDNYPPDNDVPPDEFSGWDEGF).

It belongs to the protein kinase superfamily. AGC Ser/Thr protein kinase family. cGMP subfamily. The cofactor is Mg(2+). In terms of processing, autophosphorylated.

It is found in the cytoplasm. The protein resides in the nucleus. The catalysed reaction is L-seryl-[protein] + ATP = O-phospho-L-seryl-[protein] + ADP + H(+). It carries out the reaction L-threonyl-[protein] + ATP = O-phospho-L-threonyl-[protein] + ADP + H(+). Its activity is regulated as follows. Binding of cGMP results in enzyme activation. Its function is as follows. Promotes chemoreceptor gene expression in response to increased cGMP levels by antagonizing the gene repression functions of the class II HDAC hda-4 and the mef-2 transcription factor. Regulates gene expression via recruitment of a histone deacetylase complex containing hda-2, saeg-1 and saeg-2. Represses body size and lifespan through the dbl-1 and insulin pathways, respectively. May also signal through daf-3 and/or daf-5. Role in egg-laying, dauer formation and motility. Regulates behavioral responses to various chemosensory stimuli in sensory neurons. Required for the initiation of long term adaptation to prolonged odor exposure which results in a decrease in odor seeking behavior. May regulate this process by phosphorylating tax-2, a subunit of cyclic nucleotide-gated channel tax-2/tax-4. In ASH sensory neurons, negatively regulates avoidance behavior to some bitter tastants, such as quinine, probably by phosphorylating rgs-2 and rgs-3 which are 2 regulator of G-protein signaling proteins. In AWB sensory neurons, involved in avoidance behavior to some repellent odors. In ASE left (ASEL) sensory neuron, involved in the sensing of environmental alkalinity downstream of receptor-type guanylate cyclase gcy-14. In sensory neurons, involved in the signaling pathway downstream of insulin, TGF-beta and receptor-type guanylate cyclase responsible for inducing quiescence after food intake. Might play a role in aversive olfactory learning in AWC neurons when an odor is associated with food deprivation, depending on the ins-1/age-1 signal from the AIA to the AWC neurons. Probably by regulating neuronal transmission downstream of lin-3 and receptor lin-23 and phospholipase plc-3 in ALA neurons, involved in the decrease in locomotion during the quiescent state that precedes each larval molt. The sequence is that of cGMP-dependent protein kinase egl-4 from Caenorhabditis briggsae.